A 206-amino-acid chain; its full sequence is N-(5'-phosphoribosyl)anthranilate isomerase (206 aa).

This sequence belongs to the TrpF family.

The enzyme catalyses N-(5-phospho-beta-D-ribosyl)anthranilate = 1-(2-carboxyphenylamino)-1-deoxy-D-ribulose 5-phosphate. It participates in amino-acid biosynthesis; L-tryptophan biosynthesis; L-tryptophan from chorismate: step 3/5. This Pseudomonas savastanoi pv. phaseolicola (strain 1448A / Race 6) (Pseudomonas syringae pv. phaseolicola (strain 1448A / Race 6)) protein is N-(5'-phosphoribosyl)anthranilate isomerase.